Reading from the N-terminus, the 339-residue chain is Phenylalanine--tRNA ligase alpha subunit (339 aa).

E253 lines the Mg(2+) pocket.

This sequence belongs to the class-II aminoacyl-tRNA synthetase family. Phe-tRNA synthetase alpha subunit type 1 subfamily. Tetramer of two alpha and two beta subunits. Mg(2+) is required as a cofactor.

It localises to the cytoplasm. It carries out the reaction tRNA(Phe) + L-phenylalanine + ATP = L-phenylalanyl-tRNA(Phe) + AMP + diphosphate + H(+). The polypeptide is Phenylalanine--tRNA ligase alpha subunit (Geobacter sulfurreducens (strain ATCC 51573 / DSM 12127 / PCA)).